Consider the following 623-residue polypeptide: Putative ABC transporter ATP-binding protein MG014 (623 aa).

One can recognise an ABC transmembrane type-1 domain in the interval L16–S325. A run of 6 helical transmembrane segments spans residues I27–I47, V81–I101, F157–T177, D181–N201, N266–F286, and I307–T327. Residues L365 to S611 enclose the ABC transporter domain. G400–S407 lines the ATP pocket.

Belongs to the ABC transporter superfamily.

It is found in the cell membrane. This chain is Putative ABC transporter ATP-binding protein MG014, found in Mycoplasma genitalium (strain ATCC 33530 / DSM 19775 / NCTC 10195 / G37) (Mycoplasmoides genitalium).